The primary structure comprises 247 residues: ATP synthase subunit a, chloroplastic (247 aa).

A run of 5 helical transmembrane segments spans residues Q38 to V58, V95 to L115, I134 to T154, L199 to L219, and G220 to G240.

Belongs to the ATPase A chain family. In terms of assembly, F-type ATPases have 2 components, CF(1) - the catalytic core - and CF(0) - the membrane proton channel. CF(1) has five subunits: alpha(3), beta(3), gamma(1), delta(1), epsilon(1). CF(0) has four main subunits: a, b, b' and c.

The protein resides in the plastid. The protein localises to the chloroplast thylakoid membrane. Functionally, key component of the proton channel; it plays a direct role in the translocation of protons across the membrane. The chain is ATP synthase subunit a, chloroplastic from Guizotia abyssinica (Niger).